The primary structure comprises 242 residues: 7-cyano-7-deazaguanine synthase (242 aa).

ATP is bound at residue 14–24; the sequence is FSGGQDSATCL. Zn(2+) contacts are provided by Cys202, Cys217, Cys220, and Cys223.

It belongs to the QueC family. Zn(2+) is required as a cofactor.

It carries out the reaction 7-carboxy-7-deazaguanine + NH4(+) + ATP = 7-cyano-7-deazaguanine + ADP + phosphate + H2O + H(+). Its pathway is purine metabolism; 7-cyano-7-deazaguanine biosynthesis. In terms of biological role, catalyzes the ATP-dependent conversion of 7-carboxy-7-deazaguanine (CDG) to 7-cyano-7-deazaguanine (preQ(0)). This is 7-cyano-7-deazaguanine synthase from Rhodopseudomonas palustris (strain BisA53).